The following is a 422-amino-acid chain: Interferon-induced protein 44 (422 aa).

Positions Met-1–Glu-147 constitute a TLDc domain.

Belongs to the IFI44 family.

It localises to the cytoplasm. Functionally, this protein aggregates to form microtubular structures. This Mus musculus (Mouse) protein is Interferon-induced protein 44 (Ifi44).